Consider the following 546-residue polypeptide: Chaperonin GroEL (546 aa).

Residues 29–32 (TLGP), lysine 50, 86–90 (DGTTT), glycine 415, and aspartate 495 each bind ATP. A disordered region spans residues 526 to 546 (EDNAGGGGMPQGMGGGMPGMM). The span at 529 to 546 (AGGGGMPQGMGGGMPGMM) shows a compositional bias: gly residues.

The protein belongs to the chaperonin (HSP60) family. As to quaternary structure, forms a cylinder of 14 subunits composed of two heptameric rings stacked back-to-back. Interacts with the co-chaperonin GroES.

It is found in the cytoplasm. It carries out the reaction ATP + H2O + a folded polypeptide = ADP + phosphate + an unfolded polypeptide.. Its function is as follows. Together with its co-chaperonin GroES, plays an essential role in assisting protein folding. The GroEL-GroES system forms a nano-cage that allows encapsulation of the non-native substrate proteins and provides a physical environment optimized to promote and accelerate protein folding. In Christiangramia forsetii (strain DSM 17595 / CGMCC 1.15422 / KT0803) (Gramella forsetii), this protein is Chaperonin GroEL.